We begin with the raw amino-acid sequence, 260 residues long: Sulfoquinovose 1-dehydrogenase (260 aa).

Tyrosine 160 functions as the Proton acceptor in the catalytic mechanism.

The protein belongs to the short-chain dehydrogenases/reductases (SDR) family.

It carries out the reaction 6-sulfo-D-quinovose + NAD(+) = 6-deoxy-6-sulfo-D-glucono-1,5-lactone + NADH + H(+). Functionally, catalyzes the oxidation of sulfoquinovose to 6-deoxy-6-sulfo-D-glucono-1,5-lactone, with a strong preference for NAD(+) as the electron acceptor. Is involved in a degradation pathway of sulfoquinovose (SQ) that allows P.putida SQ1 to use SQ as the sole carbon and energy source for growth. The chain is Sulfoquinovose 1-dehydrogenase from Pseudomonas putida (Arthrobacter siderocapsulatus).